Reading from the N-terminus, the 524-residue chain is Bifunctional purine biosynthesis protein PurH (524 aa).

The region spanning 1–145 (MIKQALLSVS…KNHRDVTVIV (145 aa)) is the MGS-like domain.

The protein belongs to the PurH family.

It catalyses the reaction (6R)-10-formyltetrahydrofolate + 5-amino-1-(5-phospho-beta-D-ribosyl)imidazole-4-carboxamide = 5-formamido-1-(5-phospho-D-ribosyl)imidazole-4-carboxamide + (6S)-5,6,7,8-tetrahydrofolate. The catalysed reaction is IMP + H2O = 5-formamido-1-(5-phospho-D-ribosyl)imidazole-4-carboxamide. Its pathway is purine metabolism; IMP biosynthesis via de novo pathway; 5-formamido-1-(5-phospho-D-ribosyl)imidazole-4-carboxamide from 5-amino-1-(5-phospho-D-ribosyl)imidazole-4-carboxamide (10-formyl THF route): step 1/1. It participates in purine metabolism; IMP biosynthesis via de novo pathway; IMP from 5-formamido-1-(5-phospho-D-ribosyl)imidazole-4-carboxamide: step 1/1. This chain is Bifunctional purine biosynthesis protein PurH, found in Cupriavidus necator (strain ATCC 17699 / DSM 428 / KCTC 22496 / NCIMB 10442 / H16 / Stanier 337) (Ralstonia eutropha).